Here is a 171-residue protein sequence, read N- to C-terminus: Peptidyl-prolyl cis-trans isomerase (171 aa).

In terms of domain architecture, PPIase cyclophilin-type spans 7–170; it reads FFDLTIGGAP…KPVVIADCGQ (164 aa).

This sequence belongs to the cyclophilin-type PPIase family. As to expression, expressed in leaves, floral buds, growing shoots and stamens at anthesis.

The protein localises to the cytoplasm. It carries out the reaction [protein]-peptidylproline (omega=180) = [protein]-peptidylproline (omega=0). With respect to regulation, binds cyclosporin A (CsA). CsA mediates some of its effects via an inhibitory action on PPIase. In terms of biological role, PPIases accelerate the folding of proteins. It catalyzes the cis-trans isomerization of proline imidic peptide bonds in oligopeptides. In Solanum lycopersicum (Tomato), this protein is Peptidyl-prolyl cis-trans isomerase.